The primary structure comprises 193 residues: Peptidyl-tRNA hydrolase (193 aa).

Y14 contributes to the tRNA binding site. H19 acts as the Proton acceptor in catalysis. TRNA contacts are provided by F64, N66, and N112.

The protein belongs to the PTH family. As to quaternary structure, monomer.

Its subcellular location is the cytoplasm. It catalyses the reaction an N-acyl-L-alpha-aminoacyl-tRNA + H2O = an N-acyl-L-amino acid + a tRNA + H(+). In terms of biological role, hydrolyzes ribosome-free peptidyl-tRNAs (with 1 or more amino acids incorporated), which drop off the ribosome during protein synthesis, or as a result of ribosome stalling. Its function is as follows. Catalyzes the release of premature peptidyl moieties from peptidyl-tRNA molecules trapped in stalled 50S ribosomal subunits, and thus maintains levels of free tRNAs and 50S ribosomes. This Bartonella quintana (strain Toulouse) (Rochalimaea quintana) protein is Peptidyl-tRNA hydrolase.